A 147-amino-acid polypeptide reads, in one-letter code: UPF0260 protein PMI1174 (147 aa).

This sequence belongs to the UPF0260 family.

The polypeptide is UPF0260 protein PMI1174 (Proteus mirabilis (strain HI4320)).